The chain runs to 452 residues: Retinoid-inducible serine carboxypeptidase (452 aa).

An N-terminal signal peptide occupies residues 1 to 28 (MELSRRICLVRLWLLLLSFLLGFSAGSA). N64, N102, and N126 each carry an N-linked (GlcNAc...) asparagine glycan. S167 is a catalytic residue. Residues N192 and N362 are each glycosylated (N-linked (GlcNAc...) asparagine). Active-site residues include D371 and H431.

It belongs to the peptidase S10 family.

It is found in the secreted. May be involved in vascular wall and kidney homeostasis. This chain is Retinoid-inducible serine carboxypeptidase (Scpep1), found in Mus musculus (Mouse).